A 154-amino-acid polypeptide reads, in one-letter code: Ribonuclease H (154 aa).

An RNase H type-1 domain is found at 9 to 150 (SHPHIIIYTD…ADALANKGVE (142 aa)). 4 residues coordinate Mg(2+): aspartate 18, glutamate 56, aspartate 78, and aspartate 142.

The protein belongs to the RNase H family. As to quaternary structure, monomer. The cofactor is Mg(2+).

Its subcellular location is the cytoplasm. It carries out the reaction Endonucleolytic cleavage to 5'-phosphomonoester.. In terms of biological role, endonuclease that specifically degrades the RNA of RNA-DNA hybrids. The chain is Ribonuclease H from Polynucleobacter asymbioticus (strain DSM 18221 / CIP 109841 / QLW-P1DMWA-1) (Polynucleobacter necessarius subsp. asymbioticus).